Here is a 348-residue protein sequence, read N- to C-terminus: Major outer membrane protein (348 aa).

A signal peptide spans 1–20; sequence MKKTIVALAVAAVAATSANA.

In terms of assembly, disulfide bond interactions within and between MOMP molecules and other components form high molecular-weight oligomers.

The protein localises to the cell outer membrane. Its function is as follows. Structural rigidity of the outer membrane of elementary bodies and porin forming, permitting diffusion of solutes through the intracellular reticulate body membrane. The chain is Major outer membrane protein (ompH) from Pasteurella multocida (strain Pm70).